Here is a 4499-residue protein sequence, read N- to C-terminus: Dynein alpha chain, flagellar outer arm (4499 aa).

Positions 1 to 1677 (MSIFWEVPNA…RIRICDASFP (1677 aa)) are stem. Kelch repeat units follow at residues 29-84 (RFVL…ALDD), 86-135 (RLLV…RFGS), 137-183 (VFIF…RFDH), 199-245 (KLLI…VCDG), 253-304 (KVFS…FDVK), and 307-358 (SLLI…IRGL). The Filamin repeat unit spans residues 425-534 (FANTAARNCI…IRGSPFTVKC (110 aa)). Kelch repeat units lie at residues 562-608 (ELVL…VLSD) and 610-661 (ELVV…AVSA). The disordered stretch occupies residues 653 to 720 (PKGAAAVSAE…SRPVSAKPAP (68 aa)). The span at 655–689 (GAAAVSAEPSAEPAAEPAAEPAAEPDADAPAAEPA) shows a compositional bias: low complexity. The span at 690–705 (AEGEEGAVPAEGEEGA) shows a compositional bias: acidic residues. 2 Kelch repeats span residues 750 to 801 (LYVM…ATGN) and 864 to 913 (KLFL…TLSG). Coiled-coil stretches lie at residues 1261-1334 (ELHK…MIAN) and 1382-1450 (KKEL…RRAF). AAA stretches follow at residues 1678 to 1921 (YGYE…VLVV) and 1981 to 2225 (DVIV…KSYS). ATP is bound by residues 1716–1723 (GPAGTGKT) and 2019–2026 (GPTGTGRT). One copy of the Kelch 11 repeat lies at 2269-2317 (MIWAFGGGLVEKDGIPYRRNFDKWFKQTWTTVKIPGKGTVYDYFVNPKT). AAA stretches follow at residues 2331 to 2577 (DYDG…VFQG) and 2679 to 2928 (EYNE…ERRY). Residue 2369–2376 (GGAGVGKT) coordinates ATP. Residues 2655–2688 (LADKAYDEVADYTSLYKTLTEALNEYNETNAAMD) are a coiled coil. 2717–2724 (GVGGSGKQ) contributes to the ATP binding site. Residues 3003-3023 (VGVEKEKVNAENAAAQVEAEK) adopt a coiled-coil conformation. The tract at residues 3003 to 3262 (VGVEKEKVNA…ERWALTVEQL (260 aa)) is stalk. One copy of the Kelch 12 repeat lies at 3070 to 3117 (LKKPPPGVDDITAVVIILLENNPKDKSWQAAQKLMNNVDKFLERVKSF). Coiled-coil stretches lie at residues 3170–3262 (DVVQ…VEQL) and 3486–3515 (NKERPDLEETKTQLIIQNTEFTIKLKELED). An AAA 5 region spans residues 3320–3550 (LVDDALVAGW…AKRVSTEISE (231 aa)). Residues 3614-3687 (GRKKGKGLKK…VGDAEDEDDE (74 aa)) are disordered. Positions 3630–3653 (QPMDHQSLMEKARRSSGVGDRRPS) are enriched in basic and acidic residues. The AAA 6 stretch occupies residues 3843 to 4082 (LQNFCEHMMG…LTTCGDVLYN (240 aa)).

It belongs to the dynein heavy chain family. In terms of assembly, consists of at least 3 heavy chains (alpha, beta and gamma), 2 intermediate chains and 8 light chains.

The protein resides in the cell projection. Its subcellular location is the cilium. The protein localises to the flagellum. It is found in the cytoplasm. It localises to the cytoskeleton. The protein resides in the flagellum axoneme. Its function is as follows. Force generating protein of eukaryotic cilia and flagella. Produces force towards the minus ends of microtubules. Dynein has ATPase activity; the force-producing power stroke is thought to occur on release of ADP. This chain is Dynein alpha chain, flagellar outer arm (ODA11), found in Chlamydomonas reinhardtii (Chlamydomonas smithii).